The sequence spans 366 residues: Ribosomal RNA large subunit methyltransferase M (366 aa).

S-adenosyl-L-methionine is bound by residues S188, 221-224 (CPGG), D240, D260, and D277. The active-site Proton acceptor is the K306.

Belongs to the class I-like SAM-binding methyltransferase superfamily. RNA methyltransferase RlmE family. RlmM subfamily. As to quaternary structure, monomer.

The protein resides in the cytoplasm. It catalyses the reaction cytidine(2498) in 23S rRNA + S-adenosyl-L-methionine = 2'-O-methylcytidine(2498) in 23S rRNA + S-adenosyl-L-homocysteine + H(+). Its function is as follows. Catalyzes the 2'-O-methylation at nucleotide C2498 in 23S rRNA. The sequence is that of Ribosomal RNA large subunit methyltransferase M from Salmonella dublin (strain CT_02021853).